The primary structure comprises 228 residues: Protein slowmo homolog (228 aa).

The PRELI/MSF1 domain maps to 1–172 (MPLFETIKHT…TIIKVQKEAE (172 aa)).

It belongs to the slowmo family.

This is Protein slowmo homolog (slmo) from Dictyostelium discoideum (Social amoeba).